A 78-amino-acid chain; its full sequence is Small nuclear ribonucleoprotein F (78 aa).

The Sm domain maps to asparagine 7–valine 78.

Belongs to the snRNP Sm proteins family. SmF/LSm6 subfamily. In terms of assembly, belongs to the 40S cdc5-associated complex (or cwf complex), a spliceosome sub-complex reminiscent of a late-stage spliceosome composed of the U2, U5 and U6 snRNAs and at least brr2, cdc5, cwf2/prp3, cwf3/syf1, cwf4/syf3, cwf5/ecm2, spp42/cwf6, cwf7/spf27, cwf8, cwf9, cwf10, cwf11, cwf12, prp45/cwf13, cwf14, cwf15, cwf16, cwf17, cwf18, cwf19, cwf20, cwf21, cwf22, cwf23, cwf24, cwf25, cwf26, cyp7/cwf27, cwf28, cwf29/ist3, lea1, msl1, prp5/cwf1, prp10, prp12/sap130, prp17, prp22, sap61, sap62, sap114, sap145, slu7, smb1, smd1, smd3, smf1, smg1 and syf2.

The protein localises to the nucleus. It is found in the cytoplasm. Its function is as follows. Plays a role in pre-mRNA splicing as a core component of the spliceosomal U1, U2, U4 and U5 small nuclear ribonucleoproteins (snRNPs), the building blocks of the spliceosome. The chain is Small nuclear ribonucleoprotein F (smf1) from Schizosaccharomyces pombe (strain 972 / ATCC 24843) (Fission yeast).